A 313-amino-acid chain; its full sequence is Cytochrome c biogenesis protein CcsA (313 aa).

The next 8 membrane-spanning stretches (helical) occupy residues 9 to 29, 44 to 64, 71 to 91, 111 to 131, 143 to 163, 217 to 237, 244 to 264, and 278 to 298; these read ILTH…LITF, GIIV…VSSG, LYES…IPYF, GFAT…VPAL, MILG…LLVI, VISL…VWAN, WNWD…AIYL, and AIVA…VNLL.

The protein belongs to the CcmF/CycK/Ccl1/NrfE/CcsA family. As to quaternary structure, may interact with Ccs1.

It is found in the plastid. The protein resides in the chloroplast thylakoid membrane. In terms of biological role, required during biogenesis of c-type cytochromes (cytochrome c6 and cytochrome f) at the step of heme attachment. In Solanum lycopersicum (Tomato), this protein is Cytochrome c biogenesis protein CcsA.